A 375-amino-acid chain; its full sequence is Succinyl-diaminopimelate desuccinylase (375 aa).

His66 contributes to the Zn(2+) binding site. Residue Asp68 is part of the active site. Asp99 lines the Zn(2+) pocket. Glu133 serves as the catalytic Proton acceptor. 3 residues coordinate Zn(2+): Glu134, Glu162, and His348.

This sequence belongs to the peptidase M20A family. DapE subfamily. In terms of assembly, homodimer. Zn(2+) serves as cofactor. Requires Co(2+) as cofactor.

It catalyses the reaction N-succinyl-(2S,6S)-2,6-diaminopimelate + H2O = (2S,6S)-2,6-diaminopimelate + succinate. It participates in amino-acid biosynthesis; L-lysine biosynthesis via DAP pathway; LL-2,6-diaminopimelate from (S)-tetrahydrodipicolinate (succinylase route): step 3/3. Catalyzes the hydrolysis of N-succinyl-L,L-diaminopimelic acid (SDAP), forming succinate and LL-2,6-diaminopimelate (DAP), an intermediate involved in the bacterial biosynthesis of lysine and meso-diaminopimelic acid, an essential component of bacterial cell walls. The chain is Succinyl-diaminopimelate desuccinylase from Salmonella choleraesuis (strain SC-B67).